Here is a 199-residue protein sequence, read N- to C-terminus: ParB-like protein Saci_1498 (199 aa).

Belongs to the ParB family.

Its function is as follows. Probably part of a 4-gene DNA damage response locus in which the upstream ups system, in combination with this downstream locus, functions in homologous recombination to rescue Sulfolobales from DNA-damaging threats. This protein might function in the DNA transfer machinery. This Sulfolobus acidocaldarius (strain ATCC 33909 / DSM 639 / JCM 8929 / NBRC 15157 / NCIMB 11770) protein is ParB-like protein Saci_1498.